The sequence spans 526 residues: MSNIKSSEISDILKMQLKGIDSRIKFEEIGRVLQVSDGVARIFGLNNAETGELLQFDSGDMAVVMNLEEDNVGTVLLGETSKVQEGDRVKRTKRIVSIPMKNGMLGRVVNPFGSPLDGKGPILGKEIDMPLERKAPGVIYRCPVVEPLQTGIKSIDAMIPIGRGQRELIIGDRQVGKTTISIDTIINQKANYETGDPIYCIYVAIGQKASTVANIVNTLKEYGALNYTIIVVAAASDPAAMQFYAPFAGAAIGEFFRDTGRHALVVYDDLSKHAVAYREVSLVLRRPSGREAYPGDIFYLHSRLLERAAKIINNDSVAASMNDLPNNLRGQVKGGGSLTALPIIETQAGDVSAYIPTNVISITDGQIFLETGLFNAGIRPAVNVGISVSRVGGKAQIKAMKKVAGTLKIDQAQYRELEAFTKFGGDMDAVTRATLDKGRKNVELLIQSQYNPLPVEKEIAIIFIGIKGLLSDVPVERVREFETEFLDILEMKYRKDILDMLKQGVLDEKIEKKLNTIASIVANNFK.

171–178 (GDRQVGKT) is a binding site for ATP.

Belongs to the ATPase alpha/beta chains family. As to quaternary structure, F-type ATPases have 2 components, CF(1) - the catalytic core - and CF(0) - the membrane proton channel. CF(1) has five subunits: alpha(3), beta(3), gamma(1), delta(1), epsilon(1). CF(0) has three main subunits: a(1), b(2) and c(9-12). The alpha and beta chains form an alternating ring which encloses part of the gamma chain. CF(1) is attached to CF(0) by a central stalk formed by the gamma and epsilon chains, while a peripheral stalk is formed by the delta and b chains.

It localises to the cell inner membrane. The catalysed reaction is ATP + H2O + 4 H(+)(in) = ADP + phosphate + 5 H(+)(out). In terms of biological role, produces ATP from ADP in the presence of a proton gradient across the membrane. The alpha chain is a regulatory subunit. This Azobacteroides pseudotrichonymphae genomovar. CFP2 protein is ATP synthase subunit alpha.